Here is a 175-residue protein sequence, read N- to C-terminus: Cytidylate kinase (175 aa).

7–15 provides a ligand contact to ATP; the sequence is GLPGSGTTT.

It belongs to the cytidylate kinase family. Type 2 subfamily.

The protein localises to the cytoplasm. The enzyme catalyses CMP + ATP = CDP + ADP. It catalyses the reaction dCMP + ATP = dCDP + ADP. This chain is Cytidylate kinase, found in Methanococcoides burtonii (strain DSM 6242 / NBRC 107633 / OCM 468 / ACE-M).